Reading from the N-terminus, the 841-residue chain is Protein NLP6 (841 aa).

Positions E539 to S624 constitute an RWP-RK domain. The segment at N649 to A682 is disordered. Positions P651–Q662 are enriched in polar residues. Residues L741–V823 enclose the PB1 domain.

It localises to the nucleus. Its function is as follows. Probable transcription factor. In Arabidopsis thaliana (Mouse-ear cress), this protein is Protein NLP6 (NLP6).